The primary structure comprises 609 residues: Dihydroxy-acid dehydratase (609 aa).

A Mg(2+)-binding site is contributed by Asp-81. Cys-122 contributes to the [2Fe-2S] cluster binding site. Residues Asp-123 and Lys-124 each coordinate Mg(2+). Lys-124 carries the post-translational modification N6-carboxylysine. Residue Cys-195 participates in [2Fe-2S] cluster binding. Glu-491 is a binding site for Mg(2+). Ser-517 functions as the Proton acceptor in the catalytic mechanism.

Belongs to the IlvD/Edd family. Homodimer. Requires [2Fe-2S] cluster as cofactor. Mg(2+) is required as a cofactor.

It catalyses the reaction (2R)-2,3-dihydroxy-3-methylbutanoate = 3-methyl-2-oxobutanoate + H2O. It carries out the reaction (2R,3R)-2,3-dihydroxy-3-methylpentanoate = (S)-3-methyl-2-oxopentanoate + H2O. The protein operates within amino-acid biosynthesis; L-isoleucine biosynthesis; L-isoleucine from 2-oxobutanoate: step 3/4. It functions in the pathway amino-acid biosynthesis; L-valine biosynthesis; L-valine from pyruvate: step 3/4. In terms of biological role, functions in the biosynthesis of branched-chain amino acids. Catalyzes the dehydration of (2R,3R)-2,3-dihydroxy-3-methylpentanoate (2,3-dihydroxy-3-methylvalerate) into 2-oxo-3-methylpentanoate (2-oxo-3-methylvalerate) and of (2R)-2,3-dihydroxy-3-methylbutanoate (2,3-dihydroxyisovalerate) into 2-oxo-3-methylbutanoate (2-oxoisovalerate), the penultimate precursor to L-isoleucine and L-valine, respectively. This is Dihydroxy-acid dehydratase from Acinetobacter baumannii (strain AB307-0294).